The following is a 142-amino-acid chain: MFQGASALTLDAKGRMSIPSRHREALQLQAEGRVTVTKHPDGCLMLFPRPEWERFRERIAALPMEAHWWKRIFLGSAADVELDTAGRVLITPELRAAASLERDVMLLGMGSHFEVWDAATYTAKEQAAMAQGMPDALKNFSF.

SpoVT-AbrB domains are found at residues 5 to 51 (ASAL…PRPE) and 77 to 120 (AADV…DAAT).

Belongs to the MraZ family. As to quaternary structure, forms oligomers.

The protein localises to the cytoplasm. The protein resides in the nucleoid. The protein is Transcriptional regulator MraZ of Ralstonia pickettii (strain 12J).